Here is a 430-residue protein sequence, read N- to C-terminus: Glutamate-1-semialdehyde 2,1-aminomutase (430 aa).

The residue at position 267 (lysine 267) is an N6-(pyridoxal phosphate)lysine.

Belongs to the class-III pyridoxal-phosphate-dependent aminotransferase family. HemL subfamily. As to quaternary structure, homodimer. Pyridoxal 5'-phosphate serves as cofactor.

The protein resides in the cytoplasm. It carries out the reaction (S)-4-amino-5-oxopentanoate = 5-aminolevulinate. Its pathway is porphyrin-containing compound metabolism; protoporphyrin-IX biosynthesis; 5-aminolevulinate from L-glutamyl-tRNA(Glu): step 2/2. The sequence is that of Glutamate-1-semialdehyde 2,1-aminomutase from Anaeromyxobacter dehalogenans (strain 2CP-1 / ATCC BAA-258).